A 375-amino-acid chain; its full sequence is Histidine biosynthesis bifunctional protein HisB (375 aa).

Residues 1–168 (MTPIVFIDRD…GIAHTLADAP (168 aa)) form a histidinol-phosphatase region. The active-site Nucleophile is aspartate 8. 3 residues coordinate Mg(2+): aspartate 8, aspartate 10, and aspartate 128. Aspartate 10 acts as the Proton donor in catalysis. The imidazoleglycerol-phosphate dehydratase stretch occupies residues 169–375 (RRAVVQRHTK…HVLPSTKGAL (207 aa)).

In the N-terminal section; belongs to the histidinol-phosphatase family. It in the C-terminal section; belongs to the imidazoleglycerol-phosphate dehydratase family. Requires Mg(2+) as cofactor.

It is found in the cytoplasm. The catalysed reaction is D-erythro-1-(imidazol-4-yl)glycerol 3-phosphate = 3-(imidazol-4-yl)-2-oxopropyl phosphate + H2O. It catalyses the reaction L-histidinol phosphate + H2O = L-histidinol + phosphate. The protein operates within amino-acid biosynthesis; L-histidine biosynthesis; L-histidine from 5-phospho-alpha-D-ribose 1-diphosphate: step 6/9. Its pathway is amino-acid biosynthesis; L-histidine biosynthesis; L-histidine from 5-phospho-alpha-D-ribose 1-diphosphate: step 8/9. The chain is Histidine biosynthesis bifunctional protein HisB from Xylella fastidiosa (strain Temecula1 / ATCC 700964).